The chain runs to 306 residues: Tyrosine recombinase XerC (306 aa).

The 85-residue stretch at 1 to 85 (MQQQLEQFLA…AIKSFFEYLQ (85 aa)) folds into the Core-binding (CB) domain. Residues 106–289 (FLPKAITVAQ…SNDRAVKYDQ (184 aa)) enclose the Tyr recombinase domain. Residues R147, K171, H241, R244, and H267 contribute to the active site. The O-(3'-phospho-DNA)-tyrosine intermediate role is filled by Y276.

It belongs to the 'phage' integrase family. XerC subfamily. In terms of assembly, forms a cyclic heterotetrameric complex composed of two molecules of XerC and two molecules of XerD.

Its subcellular location is the cytoplasm. In terms of biological role, site-specific tyrosine recombinase, which acts by catalyzing the cutting and rejoining of the recombining DNA molecules. The XerC-XerD complex is essential to convert dimers of the bacterial chromosome into monomers to permit their segregation at cell division. It also contributes to the segregational stability of plasmids. The sequence is that of Tyrosine recombinase XerC from Herpetosiphon aurantiacus (strain ATCC 23779 / DSM 785 / 114-95).